Consider the following 417-residue polypeptide: Serine hydroxymethyltransferase (417 aa).

Residues leucine 121 and 125-127 (GHL) each bind (6S)-5,6,7,8-tetrahydrofolate. Lysine 229 carries the post-translational modification N6-(pyridoxal phosphate)lysine. 355–357 (SPF) serves as a coordination point for (6S)-5,6,7,8-tetrahydrofolate.

The protein belongs to the SHMT family. In terms of assembly, homodimer. Requires pyridoxal 5'-phosphate as cofactor.

The protein resides in the cytoplasm. It catalyses the reaction (6R)-5,10-methylene-5,6,7,8-tetrahydrofolate + glycine + H2O = (6S)-5,6,7,8-tetrahydrofolate + L-serine. It participates in one-carbon metabolism; tetrahydrofolate interconversion. The protein operates within amino-acid biosynthesis; glycine biosynthesis; glycine from L-serine: step 1/1. In terms of biological role, catalyzes the reversible interconversion of serine and glycine with tetrahydrofolate (THF) serving as the one-carbon carrier. This reaction serves as the major source of one-carbon groups required for the biosynthesis of purines, thymidylate, methionine, and other important biomolecules. Also exhibits THF-independent aldolase activity toward beta-hydroxyamino acids, producing glycine and aldehydes, via a retro-aldol mechanism. This Tolumonas auensis (strain DSM 9187 / NBRC 110442 / TA 4) protein is Serine hydroxymethyltransferase.